Consider the following 139-residue polypeptide: Ribosome-binding factor A (139 aa).

It belongs to the RbfA family. Monomer. Binds 30S ribosomal subunits, but not 50S ribosomal subunits or 70S ribosomes.

It localises to the cytoplasm. Its function is as follows. One of several proteins that assist in the late maturation steps of the functional core of the 30S ribosomal subunit. Associates with free 30S ribosomal subunits (but not with 30S subunits that are part of 70S ribosomes or polysomes). Required for efficient processing of 16S rRNA. May interact with the 5'-terminal helix region of 16S rRNA. The polypeptide is Ribosome-binding factor A (Methylobacterium sp. (strain 4-46)).